Consider the following 482-residue polypeptide: Alpha-ketoglutarate semialdehyde dehydrogenase (482 aa).

A disordered region spans residues 1-28 (MTDPSKNYVNGEWVTSETGETTEVTNPA). Low complexity predominate over residues 11-25 (GEWVTSETGETTEVT). Cys284 is a catalytic residue.

Belongs to the aldehyde dehydrogenase family. As to quaternary structure, homotetramer.

The enzyme catalyses 2,5-dioxopentanoate + NADP(+) + H2O = 2-oxoglutarate + NADPH + 2 H(+). Its pathway is carbohydrate metabolism; D-xylose degradation. Its function is as follows. Alpha-ketoglutarate semialdehyde dehydrogenase involved in the degradation of D-xylose, a major component of hemicelluloses such as xylan. Catalyzes the fifth reaction in the xylose utilization pathway through dehydratation of alpha-ketoglutarate semialdehyde (2,5-dioxopentanoate) into alpha-ketoglutarate. The protein is Alpha-ketoglutarate semialdehyde dehydrogenase of Haloferax volcanii (strain ATCC 29605 / DSM 3757 / JCM 8879 / NBRC 14742 / NCIMB 2012 / VKM B-1768 / DS2) (Halobacterium volcanii).